The primary structure comprises 141 residues: Hemoglobin subunit alpha (141 aa).

In terms of domain architecture, Globin spans 1 to 141; sequence VLSSADKANI…VSTVLTSKYR (141 aa). The residue at position 3 (Ser-3) is a Phosphoserine. Residues Lys-7 and Lys-11 each carry the N6-succinyllysine modification. The residue at position 16 (Lys-16) is an N6-acetyllysine; alternate. An N6-succinyllysine; alternate modification is found at Lys-16. Tyr-24 is subject to Phosphotyrosine. Residue Lys-40 is modified to N6-succinyllysine. Ser-49 bears the Phosphoserine mark. His-58 contacts O2. His-87 is a binding site for heme b. Ser-102 carries the post-translational modification Phosphoserine. Thr-108 bears the Phosphothreonine mark. Ser-131 is modified (phosphoserine). A phosphothreonine mark is found at Thr-134 and Thr-137. Ser-138 carries the phosphoserine modification.

This sequence belongs to the globin family. As to quaternary structure, heterotetramer of two alpha chains and two beta chains. In terms of tissue distribution, red blood cells.

Involved in oxygen transport from the lung to the various peripheral tissues. Functionally, hemopressin acts as an antagonist peptide of the cannabinoid receptor CNR1. Hemopressin-binding efficiently blocks cannabinoid receptor CNR1 and subsequent signaling. In Crocuta crocuta (Spotted hyena), this protein is Hemoglobin subunit alpha (HBA).